A 116-amino-acid chain; its full sequence is Large ribosomal subunit protein uL18 (116 aa).

The protein belongs to the universal ribosomal protein uL18 family. In terms of assembly, part of the 50S ribosomal subunit; part of the 5S rRNA/L5/L18/L25 subcomplex. Contacts the 5S and 23S rRNAs.

Its function is as follows. This is one of the proteins that bind and probably mediate the attachment of the 5S RNA into the large ribosomal subunit, where it forms part of the central protuberance. In Shewanella putrefaciens (strain CN-32 / ATCC BAA-453), this protein is Large ribosomal subunit protein uL18.